We begin with the raw amino-acid sequence, 310 residues long: Olfactory receptor 2A12 (310 aa).

Residues 1–24 (MESNQTWITEVILLGFQVDPALEL) lie on the Extracellular side of the membrane. N4 is a glycosylation site (N-linked (GlcNAc...) asparagine). The helical transmembrane segment at 25–48 (FLFGFFLLFYSLTLMGNGIILGLI) threads the bilayer. Over 49–56 (YLDSRLHT) the chain is Cytoplasmic. A helical transmembrane segment spans residues 57 to 78 (PMYVFLSHLAIVDMSYASSTVP). The Extracellular portion of the chain corresponds to 79 to 99 (KMLANLVMHKKVISFAPCILQ). A disulfide bond links C96 and C188. A helical transmembrane segment spans residues 100–119 (TFLYLAFAITECLILVMMCY). Residues 120–138 (DRYVAICHPLQYTLIMNWR) are Cytoplasmic-facing. The helical transmembrane segment at 139–157 (VCTVLASTCWIFSFLLALV) threads the bilayer. Topologically, residues 158–194 (HITLILRLPFCGPQKINHFFCQIMSVFKLACADTRLN) are extracellular. The chain crosses the membrane as a helical span at residues 195–218 (QVVLFAGSAFILVGPLCLVLVSYL). Residues 219-235 (HILVAILRIQSGEGRRK) lie on the Cytoplasmic side of the membrane. The chain crosses the membrane as a helical span at residues 236 to 258 (AFSTCSSHLCVVGLFFGSAIVMY). At 259–271 (MAPKSSHSQERRK) the chain is on the extracellular side. A helical membrane pass occupies residues 272 to 291 (ILSLFYSLFNPILNPLIYSL). Residues 292 to 310 (RNAEVKGALKRVLWKQRSM) lie on the Cytoplasmic side of the membrane.

Belongs to the G-protein coupled receptor 1 family.

It is found in the cell membrane. Its function is as follows. Odorant receptor. This Homo sapiens (Human) protein is Olfactory receptor 2A12 (OR2A12).